A 62-amino-acid polypeptide reads, in one-letter code: uncharacterized protein (62 aa).

Residues 1-62 (MTSTQNLKDK…PPKKSLSQLP (62 aa)) form a disordered region. Residues 7–29 (LKDKFEEEIRQQKEGKGKKEKVW) are compositionally biased toward basic and acidic residues. Polar residues predominate over residues 32–43 (HSDSSYNKQTAV).

This is an uncharacterized protein from Dictyostelium discoideum (Social amoeba).